The sequence spans 144 residues: Large ribosomal subunit protein uL15 (144 aa).

The segment at 1-44 (MNLNELQPAAGSRHVRNRVGRGTSSGNGKTSGRGQKGQKARGKV) is disordered. Gly residues predominate over residues 23-35 (TSSGNGKTSGRGQ).

This sequence belongs to the universal ribosomal protein uL15 family. Part of the 50S ribosomal subunit.

Functionally, binds to the 23S rRNA. The polypeptide is Large ribosomal subunit protein uL15 (Leuconostoc mesenteroides subsp. mesenteroides (strain ATCC 8293 / DSM 20343 / BCRC 11652 / CCM 1803 / JCM 6124 / NCDO 523 / NBRC 100496 / NCIMB 8023 / NCTC 12954 / NRRL B-1118 / 37Y)).